A 432-amino-acid polypeptide reads, in one-letter code: Trigger factor (432 aa).

One can recognise a PPIase FKBP-type domain in the interval 161–246; it reads EDRVTIDFTG…LKKVEERELP (86 aa).

It belongs to the FKBP-type PPIase family. Tig subfamily. As to quaternary structure, homodimer and monomer. In vivo most of the ribosomes are in complex with monomeric TF. Uncomplexed TF, however, is in a monomer-dimer equilibrium with approximately two thirds of TF existing in a dimeric state.

It is found in the cytoplasm. The catalysed reaction is [protein]-peptidylproline (omega=180) = [protein]-peptidylproline (omega=0). Its function is as follows. Involved in protein export. Acts as a chaperone by maintaining the newly synthesized protein in an open conformation. Functions as a peptidyl-prolyl cis-trans isomerase. The chain is Trigger factor from Escherichia coli O127:H6 (strain E2348/69 / EPEC).